We begin with the raw amino-acid sequence, 141 residues long: Large ribosomal subunit protein uL11 (141 aa).

Belongs to the universal ribosomal protein uL11 family. Part of the ribosomal stalk of the 50S ribosomal subunit. Interacts with L10 and the large rRNA to form the base of the stalk. L10 forms an elongated spine to which L12 dimers bind in a sequential fashion forming a multimeric L10(L12)X complex. In terms of processing, one or more lysine residues are methylated.

Its function is as follows. Forms part of the ribosomal stalk which helps the ribosome interact with GTP-bound translation factors. The sequence is that of Large ribosomal subunit protein uL11 from Geobacillus thermodenitrificans (strain NG80-2).